Reading from the N-terminus, the 199-residue chain is Dephospho-CoA kinase (199 aa).

The DPCK domain occupies 3–199 (ILGLTGSIGM…ATAKMPQRRA (197 aa)). 11-16 (GMGKST) contacts ATP.

The protein belongs to the CoaE family.

It localises to the cytoplasm. It catalyses the reaction 3'-dephospho-CoA + ATP = ADP + CoA + H(+). Its pathway is cofactor biosynthesis; coenzyme A biosynthesis; CoA from (R)-pantothenate: step 5/5. Functionally, catalyzes the phosphorylation of the 3'-hydroxyl group of dephosphocoenzyme A to form coenzyme A. The sequence is that of Dephospho-CoA kinase from Rhodopseudomonas palustris (strain BisB18).